Reading from the N-terminus, the 562-residue chain is Arginine--tRNA ligase (562 aa).

The 'HIGH' region motif lies at 121-131; the sequence is PNIAKPFSVGH.

The protein belongs to the class-I aminoacyl-tRNA synthetase family. In terms of assembly, monomer.

Its subcellular location is the cytoplasm. The enzyme catalyses tRNA(Arg) + L-arginine + ATP = L-arginyl-tRNA(Arg) + AMP + diphosphate. The protein is Arginine--tRNA ligase of Streptococcus suis (strain 98HAH33).